The chain runs to 356 residues: 1-deoxy-D-xylulose 5-phosphate reductoisomerase (356 aa).

Thr7, Gly8, Ser9, Ile10, Gly31, Asn33, and Asn111 together coordinate NADPH. Lys112 provides a ligand contact to 1-deoxy-D-xylulose 5-phosphate. An NADPH-binding site is contributed by Glu113. A Mn(2+)-binding site is contributed by Asp131. Ser132, Glu133, Ser155, and His178 together coordinate 1-deoxy-D-xylulose 5-phosphate. Residue Glu133 coordinates Mn(2+). Gly184 lines the NADPH pocket. Residues Ser191, Asn196, Lys197, and Glu200 each coordinate 1-deoxy-D-xylulose 5-phosphate. Glu200 provides a ligand contact to Mn(2+).

The protein belongs to the DXR family. Mg(2+) is required as a cofactor. The cofactor is Mn(2+).

The catalysed reaction is 2-C-methyl-D-erythritol 4-phosphate + NADP(+) = 1-deoxy-D-xylulose 5-phosphate + NADPH + H(+). Its pathway is isoprenoid biosynthesis; isopentenyl diphosphate biosynthesis via DXP pathway; isopentenyl diphosphate from 1-deoxy-D-xylulose 5-phosphate: step 1/6. Its function is as follows. Catalyzes the NADPH-dependent rearrangement and reduction of 1-deoxy-D-xylulose-5-phosphate (DXP) to 2-C-methyl-D-erythritol 4-phosphate (MEP). This Campylobacter jejuni subsp. jejuni serotype O:6 (strain 81116 / NCTC 11828) protein is 1-deoxy-D-xylulose 5-phosphate reductoisomerase.